We begin with the raw amino-acid sequence, 459 residues long: MVQISEVKDQVPGSSAGARTAAHTHIKGLGLDEFGAAKQVEGGFVGQVEAREACGVIVDLIKAKRMSGRAILLAGGPSTGKTALALAITQELGPKVPFCPLVGSELFSVEVKKTETLMENFRRAIGLRIKEVKEVYEGEVTELTPEEAENPLGGYGKTISHVIVGLKSAKGTKTLRLDPTIYESIQREKVSVGDVIYIESNSGAVKRVGRSDAYATEFDLEAEEYVPLPKGEVHKKKEIIQDVTLHDLDVANARPQGGQDVISMMGQLMKPKKTEITEKLRHEVNKVVAKYIDQGVAELVPGVLFIDEVNMLDIEIFTFLNRALELEIAPVVVLASNRGMTTVRGTEDVVSAHGIPPDLIDRLLIVRTLPYTQDEIRVIIEKRSKVENLQLEQAALDLLAAMGSDMSLRYALQLLTPAGILAATAGRTEILLSDIEEAKMLFLDAKRSTKILESNSNYL.

75 to 82 contacts ATP; the sequence is GGPSTGKT.

Belongs to the RuvB family. In terms of assembly, may form heterododecamers with RVB2. Component of the SWR1 chromatin remodeling complex, the INO80 chromatin remodeling complex, and of the R2TP complex.

Its subcellular location is the nucleus. It catalyses the reaction ATP + H2O = ADP + phosphate + H(+). DNA helicase which participates in several chromatin remodeling complexes, including the SWR1 and the INO80 complexes. The SWR1 complex mediates the ATP-dependent exchange of histone H2A for the H2A variant HZT1 leading to transcriptional regulation of selected genes by chromatin remodeling. The INO80 complex remodels chromatin by shifting nucleosomes and is involved in DNA repair. Also involved in pre-rRNA processing. This chain is RuvB-like helicase 1 (RVB1), found in Eremothecium gossypii (strain ATCC 10895 / CBS 109.51 / FGSC 9923 / NRRL Y-1056) (Yeast).